The sequence spans 263 residues: UPF0758 protein Pden_2304 (263 aa).

The 123-residue stretch at 141–263 (VLTSWDALLD…ELSFRSEGLL (123 aa)) folds into the MPN domain. Positions 212, 214, and 225 each coordinate Zn(2+). A JAMM motif motif is present at residues 212 to 225 (HNHPSGDPTPSQAD).

It belongs to the UPF0758 family.

This chain is UPF0758 protein Pden_2304, found in Paracoccus denitrificans (strain Pd 1222).